The primary structure comprises 445 residues: Probable fructoselysine/psicoselysine transporter FrlA (445 aa).

The next 11 helical transmembrane spans lie at 10–32 (LGFWAVLAIAVGTTVGSGIFVSV), 39–61 (AGTPWLTVLAFVIGGLIVIPQMC), 97–119 (FWANDAPSLSIMALAIVSNLGFL), 126–143 (LGKFIAAGLIIAFMLLHL), 153–175 (QTLITIAKIIPFTIVIGLGIFWF), 188–210 (IGATGSFMALLAGISATSWSYTG), 230–252 (RALIGSCLLVLVLYTLLALVISG), 272–294 (WIPALGSTAGIFVAITAMIVILG), 341–363 (GIFFIFVSDLTSLLGYFTLVMCF), 384–406 (LWRTPAFGLMTPLAIASSLILVA), and 411–433 (WAPIPGLICAVIVIATGLPAYAF).

The protein belongs to the amino acid-polyamine-organocation (APC) superfamily.

It is found in the cell inner membrane. It carries out the reaction N(6)-(D-fructosyl)-L-lysine(in) = N(6)-(D-fructosyl)-L-lysine(out). It catalyses the reaction N(6)-(D-psicosyl)-L-lysine(in) = N(6)-(D-psicosyl)-L-lysine(out). Its pathway is carbohydrate metabolism; fructoselysine degradation. Is likely involved in the transport of fructoselysine and psicoselysine to the cytoplasm, where they are degraded. This Escherichia coli O157:H7 protein is Probable fructoselysine/psicoselysine transporter FrlA (frlA).